Here is a 144-residue protein sequence, read N- to C-terminus: 3-dehydroquinate dehydratase (144 aa).

Residue Tyr22 is the Proton acceptor of the active site. 3 residues coordinate substrate: Asn73, His79, and Asp86. His99 serves as the catalytic Proton donor. Substrate-binding positions include 100–101 and Arg110; that span reads LS.

Belongs to the type-II 3-dehydroquinase family. Homododecamer.

It catalyses the reaction 3-dehydroquinate = 3-dehydroshikimate + H2O. It functions in the pathway metabolic intermediate biosynthesis; chorismate biosynthesis; chorismate from D-erythrose 4-phosphate and phosphoenolpyruvate: step 3/7. Catalyzes a trans-dehydration via an enolate intermediate. The chain is 3-dehydroquinate dehydratase from Geotalea daltonii (strain DSM 22248 / JCM 15807 / FRC-32) (Geobacter daltonii).